The chain runs to 286 residues: Diaminopimelate epimerase (286 aa).

2 residues coordinate substrate: asparagine 13 and asparagine 66. The active-site Proton donor is the cysteine 75. Residues 76–77, asparagine 165, asparagine 198, and 216–217 each bind substrate; these read GN and ER. Cysteine 225 functions as the Proton acceptor in the catalytic mechanism. 226 to 227 contributes to the substrate binding site; that stretch reads GT.

This sequence belongs to the diaminopimelate epimerase family. Homodimer.

It localises to the cytoplasm. It catalyses the reaction (2S,6S)-2,6-diaminopimelate = meso-2,6-diaminopimelate. It participates in amino-acid biosynthesis; L-lysine biosynthesis via DAP pathway; DL-2,6-diaminopimelate from LL-2,6-diaminopimelate: step 1/1. Catalyzes the stereoinversion of LL-2,6-diaminopimelate (L,L-DAP) to meso-diaminopimelate (meso-DAP), a precursor of L-lysine and an essential component of the bacterial peptidoglycan. This Thermosynechococcus vestitus (strain NIES-2133 / IAM M-273 / BP-1) protein is Diaminopimelate epimerase.